The primary structure comprises 203 residues: Histidine biosynthesis bifunctional protein HisIE (203 aa).

Positions 1-114 (MLTEQQRREL…FGDTAHQWLF (114 aa)) are phosphoribosyl-AMP cyclohydrolase. The tract at residues 115-203 (LYQLEQLLAE…VIENLRKRHQ (89 aa)) is phosphoribosyl-ATP pyrophosphohydrolase.

The protein in the N-terminal section; belongs to the PRA-CH family. This sequence in the C-terminal section; belongs to the PRA-PH family.

The protein localises to the cytoplasm. The enzyme catalyses 1-(5-phospho-beta-D-ribosyl)-ATP + H2O = 1-(5-phospho-beta-D-ribosyl)-5'-AMP + diphosphate + H(+). It carries out the reaction 1-(5-phospho-beta-D-ribosyl)-5'-AMP + H2O = 1-(5-phospho-beta-D-ribosyl)-5-[(5-phospho-beta-D-ribosylamino)methylideneamino]imidazole-4-carboxamide. It functions in the pathway amino-acid biosynthesis; L-histidine biosynthesis; L-histidine from 5-phospho-alpha-D-ribose 1-diphosphate: step 2/9. Its pathway is amino-acid biosynthesis; L-histidine biosynthesis; L-histidine from 5-phospho-alpha-D-ribose 1-diphosphate: step 3/9. This Escherichia coli (strain K12) protein is Histidine biosynthesis bifunctional protein HisIE (hisI).